The primary structure comprises 116 residues: uncharacterized protein (116 aa).

The chain crosses the membrane as a helical span at residues 58 to 78 (IIVDFKFIFQIFLILSFGFFA).

It localises to the membrane. This is an uncharacterized protein from Rickettsia prowazekii (strain Madrid E).